We begin with the raw amino-acid sequence, 996 residues long: MSIKKRARAGSKSDDIGNKTPKKNGIEHEATKSSETVIEMTPSGPIAESKKWKESIARVVKSVVSIRFSQVAAFDTDESGTGEASAFVVDAKNGYMLTNRHVVCAGPFVGHAVFDNHEEVEVFPVYRDPVHDFGFLRFDPKKIRYMNVEQLELRPDLAKVGTEIRVVGNDAAEKLSILAGWISRIDRNVPDYGELTYCDFNTNYIQAAANASGGSSGSPVVERNGNVVALQAGGHMIAATDYFLPLDRPLRALRCLQNNTPITRGTIQAQFLIKTFDECSRLGLDSAMEEKVRTLFPEATSMLVVETVLPEGPSFKKLKEGDILLYVNSMILINLIELESILDESVGKDVVLTVQRGSELVELTCTAQSTHDIAPDRYVEVCGAKFHNLSYQLARQYALPVKGVFISEPAGSFRLEGPEYGYILDSIAYKPVPDLDTFIEVMRDIPDRSRVAVGYHFIHDKHSLITDVVEIDRHWLKAFRMVTRNDETGLWDFKNLGDPLPAEPSKPCTTSIPKLNVENFGPTANIINCFVKVLYYMPLHLDGSRKSRKKGTALVLDKDKGLAVTSRSTVPYDLGDLTITVADSIQIPAEVVHLHPTQNLAFIKYDPKLLGDTPIQAAKLKDYYVSQGDPVNFFGFNSKSRVVAAKTSVTDVITMVIPSSPMPRFRAINFESITVESNLSTQCGSGVLTDDDGLVVALWLTHYGEQTSRGTDVKYHLGLASPVVLSTLRRLQSGVNVNPRILNVEFRAIQLAQARSLGLPAERIRKIETESGKKHQLFMITHVEAGTPRILTDGDIIISANGKSITRIRDLQVDDVTEVDMEILREGKVQTVKVPTFPSDNCETNRVVICWGATLQAPHRAVRLQIEDLPSNVFVTNRGRGSPADQYDLGAAQFITAVNGVTTLNLEDFVREIRKIDDNSYVRVSTSTFDKVPVVLTIKMNKHYFPTIDLVQDAKAENGWRAVQYDEVGEKKNPSMGFTIDEEVDDNTFDTEGEQQ.

The interval 1-35 (MSIKKRARAGSKSDDIGNKTPKKNGIEHEATKSSE) is disordered. PDZ domains lie at 280–358 (SRLG…QRGS), 745–827 (EFRA…LREG), and 860–930 (RAVR…STFD). Residues 972 to 996 (KNPSMGFTIDEEVDDNTFDTEGEQQ) form a disordered region. The span at 980 to 996 (IDEEVDDNTFDTEGEQQ) shows a compositional bias: acidic residues.

Belongs to the peptidase S1C family.

This chain is PDZ domain-containing protein C23G3.12c, found in Schizosaccharomyces pombe (strain 972 / ATCC 24843) (Fission yeast).